Reading from the N-terminus, the 550-residue chain is Hydroxylamine reductase (550 aa).

The [2Fe-2S] cluster site is built by Cys-3, Cys-6, Cys-18, and Cys-25. Positions 249, 273, 317, 405, 433, 458, 492, and 494 each coordinate hybrid [4Fe-2O-2S] cluster. Cysteine persulfide is present on Cys-405.

It belongs to the HCP family. The cofactor is [2Fe-2S] cluster. Requires hybrid [4Fe-2O-2S] cluster as cofactor.

It localises to the cytoplasm. It carries out the reaction A + NH4(+) + H2O = hydroxylamine + AH2 + H(+). Catalyzes the reduction of hydroxylamine to form NH(3) and H(2)O. The protein is Hydroxylamine reductase of Salmonella agona (strain SL483).